The sequence spans 300 residues: Cytochrome b (300 aa).

Helical transmembrane passes span 28–48, 72–94, 107–127, 168–187, 223–243, and 279–299; these read YGFLLGIVFFIQILKGVLLAL, WCFRYMHATGASFVFILTYLHIL, SWISGLMIFLISIVTAFYGYV, FFVFIYFPFIALCQSLFGIL, IPNKTAGLLVMLASLQILFLL, and IGCQLPQILHFIWSFIYYIIL. Residues His78 and His92 each contribute to the heme b site.

Belongs to the cytochrome b family. The main subunits of complex b-c1 are: cytochrome b, cytochrome c1 and the Rieske protein. Heme b serves as cofactor.

It localises to the mitochondrion inner membrane. In terms of biological role, component of the ubiquinol-cytochrome c reductase complex (complex III or cytochrome b-c1 complex) that is part of the mitochondrial respiratory chain. The b-c1 complex mediates electron transfer from ubiquinol to cytochrome c. Contributes to the generation of a proton gradient across the mitochondrial membrane that is then used for ATP synthesis. The polypeptide is Cytochrome b (MT-CYB) (Plasmodium gallinaceum).